We begin with the raw amino-acid sequence, 439 residues long: Ribosomal protein uS12 methylthiotransferase RimO (439 aa).

The 112-residue stretch at 5-116 (PTIAISHLGC…IVNVIERVEL (112 aa)) folds into the MTTase N-terminal domain. C14, C50, C79, C154, C158, and C161 together coordinate [4Fe-4S] cluster. The 230-residue stretch at 140–369 (TTTEGVAYLR…MELQQPISQK (230 aa)) folds into the Radical SAM core domain. The TRAM domain occupies 372–438 (QQEVGKIVDV…TYDLYGQVVN (67 aa)).

This sequence belongs to the methylthiotransferase family. RimO subfamily. Requires [4Fe-4S] cluster as cofactor.

It localises to the cytoplasm. It catalyses the reaction L-aspartate(89)-[ribosomal protein uS12]-hydrogen + (sulfur carrier)-SH + AH2 + 2 S-adenosyl-L-methionine = 3-methylsulfanyl-L-aspartate(89)-[ribosomal protein uS12]-hydrogen + (sulfur carrier)-H + 5'-deoxyadenosine + L-methionine + A + S-adenosyl-L-homocysteine + 2 H(+). Its function is as follows. Catalyzes the methylthiolation of an aspartic acid residue of ribosomal protein uS12. The sequence is that of Ribosomal protein uS12 methylthiotransferase RimO from Nostoc punctiforme (strain ATCC 29133 / PCC 73102).